Here is a 165-residue protein sequence, read N- to C-terminus: MKIMKKYIKTAFFCSMYWLIVQLNIANLGTRIPDKYFRQKHIIFKSFNFEKHGKFWNKWFYVRKWKHKILDGHKLNRNIYDQRHLMTINIDEIEKMIIETKRAELIHWISILPVIIFNKGPRVVKYINIFYAMIANVPIIIVQRYNRPRLTQLLRILKRRGERHD.

The signal sequence occupies residues 1-28; it reads MKIMKKYIKTAFFCSMYWLIVQLNIANL. The helical transmembrane segment at 126 to 145 threads the bilayer; the sequence is YINIFYAMIANVPIIIVQRY.

This sequence belongs to the acyltransferase CrtO family.

The protein resides in the cell membrane. Its pathway is carotenoid biosynthesis; staphyloxanthin biosynthesis; staphyloxanthin from farnesyl diphosphate: step 5/5. Catalyzes the acylation of glycosyl-4,4'-diaponeurosporenoate, i.e. the esterification of glucose at the C6'' position with the carboxyl group of the C(15) fatty acid 12-methyltetradecanoic acid, to yield staphyloxanthin. This is the last step in the biosynthesis of this orange pigment, present in most staphylococci strains. The chain is Glycosyl-4,4'-diaponeurosporenoate acyltransferase (crtO) from Staphylococcus aureus (strain MRSA252).